The chain runs to 247 residues: UPF0273 protein PF1931 (247 aa).

The KaiC domain occupies Arg3–Leu247. Gly30–Ser37 is an ATP binding site.

Belongs to the UPF0273 family.

This Pyrococcus furiosus (strain ATCC 43587 / DSM 3638 / JCM 8422 / Vc1) protein is UPF0273 protein PF1931.